Reading from the N-terminus, the 297-residue chain is tRNA pseudouridine synthase A (297 aa).

Catalysis depends on Asp72, which acts as the Nucleophile. Tyr144 contributes to the substrate binding site.

It belongs to the tRNA pseudouridine synthase TruA family. In terms of assembly, homodimer.

It catalyses the reaction uridine(38/39/40) in tRNA = pseudouridine(38/39/40) in tRNA. Its function is as follows. Formation of pseudouridine at positions 38, 39 and 40 in the anticodon stem and loop of transfer RNAs. The chain is tRNA pseudouridine synthase A from Mycobacterium bovis (strain ATCC BAA-935 / AF2122/97).